We begin with the raw amino-acid sequence, 278 residues long: Chitosanase (278 aa).

Residues 1–41 (MRLKHPTARLALAALLVAVPRSVAAAGTVHAAPAPAGATRL) form the signal peptide. Glu63 (proton donor) is an active-site residue. Asp81 acts as the Nucleophile in catalysis.

It belongs to the glycosyl hydrolase 46 family.

It localises to the secreted. The enzyme catalyses Endohydrolysis of beta-(1-&gt;4)-linkages between D-glucosamine residues in a partly acetylated chitosan.. In terms of biological role, aids in the defense against invading fungal pathogens by degrading their cell wall chitosan. This Nocardioides sp. (strain N106) protein is Chitosanase (csn).